A 314-amino-acid chain; its full sequence is Leucine-rich repeat-containing protein 52 (314 aa).

Residues 1 to 23 (MSLASGPSSKLLLFSLGMGLVSG) form the signal peptide. The LRRNT domain occupies 24–53 (SKCPNKCVCQDQEVACIDLHLTEYPADIPL). Over 24–244 (SKCPNKCVCQ…MCITHLDQQD (221 aa)) the chain is Extracellular. Disulfide bonds link C26-C32 and C30-C39. LRR repeat units follow at residues 54–73 (NTRR…ALQL), 78–99 (DLVY…TFIG), 102–123 (RLIY…SFSV), 126–148 (NLVR…VFAN), and 151–172 (SLRY…GFHH). 3 N-linked (GlcNAc...) asparagine glycosylation sites follow: N112, N131, and N148. Residues 184–238 (NPWICNCSFLDFTIHLLVSHMDHPDAQNATCTEPAELKGWPITKVGNPLQYMCIT) form the LRRCT domain. 2 cysteine pairs are disulfide-bonded: C188–C214 and C190–C236. N-linked (GlcNAc...) asparagine glycans are attached at residues N189 and N211. A helical membrane pass occupies residues 245–265 (YIFLLLIGFCIFAAGTVAAWL). Residues 266-314 (TGVCAVLYQNALRTSSGDDTEDETGSRFANQIFRSNTHLGPIRRFPELI) are Cytoplasmic-facing.

As to quaternary structure, interacts with KCNMA1. Interacts with KCNU1; this interaction may be required for LRRC52 stability and changes the channel gating properties. In terms of processing, N-glycosylated. In terms of tissue distribution, testis-specific (at protein level). At the mRNA level, also detected in kidney, ventricle, spinal cord and skeletal muscle, although at lower levels compared to testis. Expression in testis at the protein level requires the presence of KCNU1.

The protein localises to the cell membrane. In terms of biological role, auxiliary protein of the large-conductance, voltage and calcium-activated potassium channel (BK alpha). Modulates gating properties by producing a marked shift in the BK channel's voltage dependence of activation in the hyperpolarizing direction, and in the absence of calcium. KCNU1 channel auxiliary protein. Modulates KCNU1 gating properties, shifting KCNU1 gating to more negative potentials at a given pH. This Mus musculus (Mouse) protein is Leucine-rich repeat-containing protein 52 (Lrrc52).